The following is a 54-amino-acid chain: Photosystem II reaction center protein L (54 aa).

A helical membrane pass occupies residues 33 to 53 (SLFWGLLLIFVLAVLFSSYIF).

This sequence belongs to the PsbL family. As to quaternary structure, PSII is composed of 1 copy each of membrane proteins PsbA, PsbB, PsbC, PsbD, PsbE, PsbF, PsbH, PsbI, PsbJ, PsbK, PsbL, PsbM, PsbT, PsbX, PsbY, PsbZ, Psb30/Ycf12, at least 3 peripheral proteins of the oxygen-evolving complex and a large number of cofactors. It forms dimeric complexes.

The protein resides in the plastid. The protein localises to the chloroplast thylakoid membrane. Its function is as follows. One of the components of the core complex of photosystem II (PSII). PSII is a light-driven water:plastoquinone oxidoreductase that uses light energy to abstract electrons from H(2)O, generating O(2) and a proton gradient subsequently used for ATP formation. It consists of a core antenna complex that captures photons, and an electron transfer chain that converts photonic excitation into a charge separation. This subunit is found at the monomer-monomer interface and is required for correct PSII assembly and/or dimerization. The protein is Photosystem II reaction center protein L of Stigeoclonium helveticum (Green alga).